Reading from the N-terminus, the 110-residue chain is U9-agatoxin-Ao1a (110 aa).

Positions 1-17 (MKLLLAIAGLFLVQTLA) are cleaved as a signal peptide. Positions 18–38 (EDVRAHEESSFLAAVAPEEQR) are excised as a propeptide. Cystine bridges form between C40–C54, C47–C60, C51–C87, C53–C72, and C62–C70.

It belongs to the neurotoxin 37 family. Expressed by the venom gland.

Its subcellular location is the secreted. In Agelena orientalis (Funnel-web spider), this protein is U9-agatoxin-Ao1a.